The primary structure comprises 254 residues: Major prion protein (254 aa).

An N-terminal signal peptide occupies residues 1-22 (MANLGYWLLALFVTMWTDVGLC). An interaction with ADGRG6 region spans residues 23 to 38 (KKRPKPGGWNTGGSRY). Residues 23-231 (KKRPKPGGWN…QAYYDGRRSS (209 aa)) form an interaction with GRB2, ERI3 and SYN1 region. A disordered region spans residues 25 to 104 (RPKPGGWNTG…HNQWNKPSKP (80 aa)). Pro44 carries the hydroxyproline modification. A run of 5 repeats spans residues 51 to 58 (PQGGTWGQ), 59 to 66 (PHGGGWGQ), 67 to 74 (PHGGSWGQ), 75 to 82 (PHGGSWGQ), and 83 to 90 (PHGGGWGQ). Residues 51 to 90 (PQGGTWGQPHGGGWGQPHGGSWGQPHGGSWGQPHGGGWGQ) are 5 X 8 AA tandem repeats of P-H-G-G-G-W-G-Q. Residues 54 to 94 (GTWGQPHGGGWGQPHGGSWGQPHGGSWGQPHGGGWGQGGGT) are compositionally biased toward gly residues. Cu(2+) contacts are provided by His60, Gly61, Gly62, His68, Gly69, Gly70, His76, Gly77, Gly78, His84, Gly85, and Gly86. Cys178 and Cys213 are disulfide-bonded. N-linked (GlcNAc...) asparagine glycans are attached at residues Asn180 and Asn196. The GPI-anchor amidated serine moiety is linked to residue Ser230. The propeptide at 231–254 (SSTVLFSSPPVILLISFLIFLIVG) is removed in mature form.

It belongs to the prion family. In terms of assembly, monomer and homodimer. Has a tendency to aggregate into amyloid fibrils containing a cross-beta spine, formed by a steric zipper of superposed beta-strands. Soluble oligomers may represent an intermediate stage on the path to fibril formation. Copper binding may promote oligomerization. Interacts with GRB2, APP, ERI3/PRNPIP and SYN1. Mislocalized cytosolically exposed PrP interacts with MGRN1; this interaction alters MGRN1 subcellular location and causes lysosomal enlargement. Interacts with APP. Interacts with KIAA1191. Interacts with ADGRG6. N-glycosylated. Highly expressed in the brain, lung, kidney and heart. Expressed at low levels in the liver and spleen.

It localises to the cell membrane. It is found in the golgi apparatus. Functionally, its primary physiological function is unclear. May play a role in neuronal development and synaptic plasticity. May be required for neuronal myelin sheath maintenance. May promote myelin homeostasis through acting as an agonist for ADGRG6 receptor. May play a role in iron uptake and iron homeostasis. Soluble oligomers are toxic to cultured neuroblastoma cells and induce apoptosis (in vitro). Association with GPC1 (via its heparan sulfate chains) targets PRNP to lipid rafts. Also provides Cu(2+) or Zn(2+) for the ascorbate-mediated GPC1 deaminase degradation of its heparan sulfate side chains. The protein is Major prion protein (Prnp) of Mus musculus (Mouse).